We begin with the raw amino-acid sequence, 245 residues long: tRNA pseudouridine synthase A 1 (245 aa).

Residue D53 is the Nucleophile of the active site. A substrate-binding site is contributed by Y111.

It belongs to the tRNA pseudouridine synthase TruA family. In terms of assembly, homodimer.

It carries out the reaction uridine(38/39/40) in tRNA = pseudouridine(38/39/40) in tRNA. Its function is as follows. Formation of pseudouridine at positions 38, 39 and 40 in the anticodon stem and loop of transfer RNAs. The protein is tRNA pseudouridine synthase A 1 of Clostridium tetani (strain Massachusetts / E88).